Reading from the N-terminus, the 299-residue chain is MKVLCTVLVVTLLAGCRADVEPEPEVLEPAVWKSGQPWELALGRFWDYVRWVQTLSDQVQEELLSSQVTQELTVLMEDTMKAVKAYKSELEQELVPMAEDTKARLSKELQAAQARLGADMEEVRNRLAQYRNEMQAMLGQSADELRARLASHLRKLRKRMLRDAEDLQKRLAVYKDGASEGAERGVSAIRERLGSLVEQSRVRAALTGQPLQERAQAWGKQLRGRLEEVRGQAQDRLEEMREQMEEVRVKIEEQAEAFQTRLKGWFEPMVEDMRRQWADLIEKVQAAVGASTPVPSQKP.

The N-terminal stretch at 1–18 (MKVLCTVLVVTLLAGCRA) is a signal peptide. Tandem repeats lie at residues 74-95 (VLME…QELV), 96-117 (PMAE…ARLG), 118-139 (ADME…AMLG), 140-161 (QSAD…KRML), 162-183 (RDAE…EGAE), 184-205 (RGVS…VRAA), and 224-245 (GRLE…EQME). An 8 X 22 AA approximate tandem repeats region spans residues 74–245 (VLMEDTMKAV…RLEEMREQME (172 aa)). Methionine sulfoxide is present on methionine 137. Serine 141 carries the phosphoserine modification. The LDL and other lipoprotein receptors binding stretch occupies residues 152 to 162 (HLRKLRKRMLR). Residue 156–159 (LRKR) coordinates heparin. Residues 204–273 (AALTGQPLQE…GWFEPMVEDM (70 aa)) are lipid-binding and lipoprotein association. Residue 219-226 (GKQLRGRL) coordinates heparin. A specificity for association with VLDL region spans residues 261 to 273 (RLKGWFEPMVEDM).

This sequence belongs to the apolipoprotein A1/A4/E family. As to quaternary structure, homotetramer. May interact with ABCA1; functionally associated with ABCA1 in the biogenesis of HDLs. May interact with APP/A4 amyloid-beta peptide; the interaction is extremely stable in vitro but its physiological significance is unclear. May interact with MAPT. May interact with MAP2. In the cerebrospinal fluid, interacts with secreted SORL1. Interacts with PMEL; this allows the loading of PMEL luminal fragment on ILVs to induce fibril nucleation. In terms of processing, APOE exists as multiple glycosylated and sialylated glycoforms within cells and in plasma. The extent of glycosylation and sialylation are tissue and context specific. Glycated in plasma VLDL. Post-translationally, phosphorylated by FAM20C in the extracellular medium.

It localises to the secreted. The protein localises to the extracellular space. Its subcellular location is the extracellular matrix. The protein resides in the extracellular vesicle. It is found in the endosome. It localises to the multivesicular body. APOE is an apolipoprotein, a protein associating with lipid particles, that mainly functions in lipoprotein-mediated lipid transport between organs via the plasma and interstitial fluids. APOE is a core component of plasma lipoproteins and is involved in their production, conversion and clearance. Apolipoproteins are amphipathic molecules that interact both with lipids of the lipoprotein particle core and the aqueous environment of the plasma. As such, APOE associates with chylomicrons, chylomicron remnants, very low density lipoproteins (VLDL) and intermediate density lipoproteins (IDL) but shows a preferential binding to high-density lipoproteins (HDL). It also binds a wide range of cellular receptors including the LDL receptor/LDLR, the LDL receptor-related proteins LRP1, LRP2 and LRP8 and the very low-density lipoprotein receptor/VLDLR that mediate the cellular uptake of the APOE-containing lipoprotein particles. Finally, APOE also has a heparin-binding activity and binds heparan-sulfate proteoglycans on the surface of cells, a property that supports the capture and the receptor-mediated uptake of APOE-containing lipoproteins by cells. A main function of APOE is to mediate lipoprotein clearance through the uptake of chylomicrons, VLDLs, and HDLs by hepatocytes. APOE is also involved in the biosynthesis by the liver of VLDLs as well as their uptake by peripheral tissues ensuring the delivery of triglycerides and energy storage in muscle, heart and adipose tissues. By participating in the lipoprotein-mediated distribution of lipids among tissues, APOE plays a critical role in plasma and tissues lipid homeostasis. APOE is also involved in two steps of reverse cholesterol transport, the HDLs-mediated transport of cholesterol from peripheral tissues to the liver, and thereby plays an important role in cholesterol homeostasis. First, it is functionally associated with ABCA1 in the biogenesis of HDLs in tissues. Second, it is enriched in circulating HDLs and mediates their uptake by hepatocytes. APOE also plays an important role in lipid transport in the central nervous system, regulating neuron survival and sprouting. The sequence is that of Apolipoprotein E (APOE) from Octodon degus (Degu).